The sequence spans 364 residues: MGVTGILQLPRDRFKRTSFFLWVIILFQRTFSIPLGVIHNSTLQVNDVDKLVCRDKLSSTNQLRSVGLNLEGNGVATDVPSATKRWGFRSGVPPKVVNYEAGEWAENCYNLEIKKPDGSECLPAAPDGIRGFPRCRYVHKVSGTGPCAGDFAFHKEGAFFLYDRLASTVIYRGTTFAEGVVAFLILPQAKKDFFSSHPLREPVNATEDPSSGYYSTTIRYQATGFGTNETEYLFEVDNLTYVQLESRFTPQFLLQLNETIYTSGKRSNTTGKLIWKVNPEIDTTIGEWAFWETKKTSLEKFAVKSCLSQLYQTEPKTSVVRVRRELLPTQGPTQQLKTTKSWLQKIPLQWFKCTVKEGKLQCRI.

The signal sequence occupies residues 1–32 (MGVTGILQLPRDRFKRTSFFLWVIILFQRTFS). N-linked (GlcNAc...) asparagine; by host glycosylation occurs at Asn-40. Disulfide bonds link Cys-108/Cys-135 and Cys-121/Cys-147. N-linked (GlcNAc...) asparagine; by host glycans are attached at residues Asn-204, Asn-228, Asn-238, Asn-257, and Asn-268.

The protein belongs to the filoviruses glycoprotein family. In terms of assembly, homodimer; disulfide-linked. The homodimers are linked by two disulfide bonds in a parallel orientation. Monomer. This precursor is processed into mature sGP and delta-peptide by host furin or furin-like proteases. The cleavage site corresponds to the furin optimal cleavage sequence [KR]-X-[KR]-R. Post-translationally, N-glycosylated. In terms of processing, O-glycosylated.

The protein resides in the secreted. In terms of biological role, seems to possess an anti-inflammatory activity as it can reverse the barrier-decreasing effects of TNF alpha. Might therefore contribute to the lack of inflammatory reaction seen during infection in spite the of extensive necrosis and massive virus production. Does not seem to be involved in activation of primary macrophages. Does not seem to interact specifically with neutrophils. Functionally, viroporin that permeabilizes mammalian cell plasma membranes. It acts by altering permeation of ionic compounds and small molecules. This activity may lead to viral enterotoxic activity. This chain is Pre-small/secreted glycoprotein (GP), found in Zaire ebolavirus (strain Eckron-76) (ZEBOV).